The sequence spans 161 residues: Alpha-crystallin A chain (161 aa).

Residues 1-51 (ALGPFYPSRXXXXXXXXXXXXXXXXXXXXXXXXXXXXQSLFRTVLDSGISE) form a required for complex formation with BFSP1 and BFSP2 region. Glutamine 38 bears the Deamidated glutamine; partial mark. One can recognise a sHSP domain in the interval 40 to 150 (LFRTVLDSGI…SHSERAIPVS (111 aa)). The residue at position 87 (lysine 87) is an N6-acetyllysine. Histidine 88 is a Zn(2+) binding site. Asparagine 89 carries the post-translational modification Deamidated asparagine; partial. The Zn(2+) site is built by glutamate 90 and histidine 95. Serine 110 bears the Phosphoserine mark. Asparagine 111 is subject to Deamidated asparagine; partial. Residues cysteine 119 and cysteine 130 are joined by a disulfide bond. Deamidated glutamine; partial is present on glutamine 135. The interval 140–161 (ASHSERAIPVSREEKPSSAPSS) is disordered. Positions 141–155 (SHSERAIPVSREEKP) are enriched in basic and acidic residues. Zn(2+) is bound at residue histidine 142. Serine 150 carries an O-linked (GlcNAc) serine glycan.

This sequence belongs to the small heat shock protein (HSP20) family. Heteromer composed of three CRYAA and one CRYAB subunits. Inter-subunit bridging via zinc ions enhances stability, which is crucial as there is no protein turn over in the lens. Can also form homodimers and homotetramers (dimers of dimers) which serve as the building blocks of homooligomers. Within homooligomers, the zinc-binding motif is created from residues of 3 different molecules. His-88 and Glu-90 from one molecule are ligands of the zinc ion, and His-95 and His-142 residues from additional molecules complete the site with tetrahedral coordination geometry. Part of a complex required for lens intermediate filament formation composed of BFSP1, BFSP2 and CRYAA. In terms of processing, undergoes age-dependent proteolytical cleavage at the C-terminus.

It is found in the cytoplasm. Its subcellular location is the nucleus. Its function is as follows. Contributes to the transparency and refractive index of the lens. In its oxidized form (absence of intramolecular disulfide bond), acts as a chaperone, preventing aggregation of various proteins under a wide range of stress conditions. Required for the correct formation of lens intermediate filaments as part of a complex composed of BFSP1, BFSP2 and CRYAA. The protein is Alpha-crystallin A chain (CRYAA) of Galegeeska rufescens (East African rufous sengi).